We begin with the raw amino-acid sequence, 132 residues long: Small ribosomal subunit protein uS8 (132 aa).

Belongs to the universal ribosomal protein uS8 family. In terms of assembly, part of the 30S ribosomal subunit. Contacts proteins S5 and S12.

Functionally, one of the primary rRNA binding proteins, it binds directly to 16S rRNA central domain where it helps coordinate assembly of the platform of the 30S subunit. The protein is Small ribosomal subunit protein uS8 of Clostridium tetani (strain Massachusetts / E88).